A 308-amino-acid chain; its full sequence is ADP-L-glycero-D-manno-heptose-6-epimerase (308 aa).

NADP(+)-binding positions include 10-11, 31-32, lysine 38, lysine 53, 75-79, and asparagine 92; these read FI, DN, and EGACS. The active-site Proton acceptor is the tyrosine 139. Lysine 143 serves as a coordination point for NADP(+). A substrate-binding site is contributed by asparagine 168. 2 residues coordinate NADP(+): valine 169 and lysine 177. Lysine 177 functions as the Proton acceptor in the catalytic mechanism. Residues serine 179, histidine 186, 200–203, arginine 208, and tyrosine 271 contribute to the substrate site; that span reads FAGS.

It belongs to the NAD(P)-dependent epimerase/dehydratase family. HldD subfamily. In terms of assembly, homopentamer. It depends on NADP(+) as a cofactor.

The catalysed reaction is ADP-D-glycero-beta-D-manno-heptose = ADP-L-glycero-beta-D-manno-heptose. The protein operates within nucleotide-sugar biosynthesis; ADP-L-glycero-beta-D-manno-heptose biosynthesis; ADP-L-glycero-beta-D-manno-heptose from D-glycero-beta-D-manno-heptose 7-phosphate: step 4/4. Functionally, catalyzes the interconversion between ADP-D-glycero-beta-D-manno-heptose and ADP-L-glycero-beta-D-manno-heptose via an epimerization at carbon 6 of the heptose. This is ADP-L-glycero-D-manno-heptose-6-epimerase from Actinobacillus succinogenes (strain ATCC 55618 / DSM 22257 / CCUG 43843 / 130Z).